A 75-amino-acid chain; its full sequence is Cytochrome c oxidase assembly factor 5 (75 aa).

One can recognise a CHCH domain in the interval 28–66 (QHDCVVKEGKKPSECLKEGHCRSMQVAFFECKRSMLDTR). A Cx10C motif motif is present at residues 31–42 (CVVKEGKKPSEC). 2 cysteine pairs are disulfide-bonded: Cys31–Cys58 and Cys42–Cys48. Residues 48-58 (CRSMQVAFFEC) carry the Cx9C motif motif.

It belongs to the PET191 family.

Functionally, involved in an early step of the mitochondrial complex IV assembly process. This is Cytochrome c oxidase assembly factor 5 (coa5) from Danio rerio (Zebrafish).